The sequence spans 617 residues: Hemagglutinin glycoprotein (617 aa).

The Intravirion portion of the chain corresponds to 1 to 37 (MSPQRDRINAFYKDNPHPKGSRIVINREHLMIDRPYV). A stalk region spans residues 1–154 (MSPQRDRINA…RIKLDYDQYC (154 aa)). The helical; Signal-anchor for type II membrane protein transmembrane segment at 38 to 58 (LLAVLFVMFLSLIGLLAIAGI) threads the bilayer. The Virion surface segment spans residues 59 to 617 (RLHRAAIYTA…VTREDGTNRR (559 aa)). N-linked (GlcNAc...) asparagine; by host glycosylation is found at asparagine 168, asparagine 187, asparagine 200, asparagine 215, and asparagine 238. Disulfide bonds link cysteine 188/cysteine 606, cysteine 287/cysteine 300, cysteine 381/cysteine 494, cysteine 386/cysteine 394, and cysteine 570/cysteine 579. The tract at residues 458 to 543 (PMKNLALGVI…VEHAVVYYVY (86 aa)) is interaction with host NECTIN4 receptor.

Belongs to the paramyxoviruses hemagglutinin-neuraminidase family. Non-sialidase subfamily. As to quaternary structure, homodimer; disulfide-linked. Further forms homotetramer (dimer of dimers). Interacts (via C-terminus) with human NECTIN4 (via N-terminus); this interaction allows attachment to the respiratory epithelium and viral entry. Interacts (via C-terminus) with human SLAMF1/CD150 (via N-terminus); this interaction allows attachment and viral entry into the CD150-expressing immune cells. Interacts with human CD46 antigen (via N-terminus); this interaction allows attachment and viral entry of vaccine and laboratory-adapted strains.

It is found in the virion membrane. The protein resides in the host cell membrane. Attaches the virus to the human SLAMF1/CD150 receptor for entry into host dendritic cells, macrophages, activated memory T cells and naive or memory B cells, thereby explaining the long immunosuppression that follows infection. In the respiratory airways, binds to the NECTIN4 receptor for entry into the host cell. Binding of H protein to the receptor induces a conformational change that allows the F protein to trigger virion/cell membranes fusion. The vaccine and laboratory-adapted strains use host CD46 as an alternate receptor. The high degree of interaction between H and CD46 results in down-regulation of the latter from the surface of infected cells, rendering them more sensitive to c3b-mediated complement lysis. This is Hemagglutinin glycoprotein (H) from Measles virus (strain Edmonston) (MeV).